Reading from the N-terminus, the 79-residue chain is Putative sulfur carrier protein TM_0983 (79 aa).

Cys-17 acts as the Cysteine persulfide intermediate in catalysis.

This sequence belongs to the sulfur carrier protein TusA family.

This chain is Putative sulfur carrier protein TM_0983, found in Thermotoga maritima (strain ATCC 43589 / DSM 3109 / JCM 10099 / NBRC 100826 / MSB8).